The primary structure comprises 120 residues: Large ribosomal subunit protein uL24 (120 aa).

Belongs to the universal ribosomal protein uL24 family. As to quaternary structure, part of the 50S ribosomal subunit.

Functionally, one of two assembly initiator proteins, it binds directly to the 5'-end of the 23S rRNA, where it nucleates assembly of the 50S subunit. In terms of biological role, located at the polypeptide exit tunnel on the outside of the subunit. In Methanocaldococcus jannaschii (strain ATCC 43067 / DSM 2661 / JAL-1 / JCM 10045 / NBRC 100440) (Methanococcus jannaschii), this protein is Large ribosomal subunit protein uL24.